The chain runs to 248 residues: 3-deoxy-manno-octulosonate cytidylyltransferase (248 aa).

Belongs to the KdsB family.

The protein localises to the cytoplasm. It catalyses the reaction 3-deoxy-alpha-D-manno-oct-2-ulosonate + CTP = CMP-3-deoxy-beta-D-manno-octulosonate + diphosphate. It functions in the pathway nucleotide-sugar biosynthesis; CMP-3-deoxy-D-manno-octulosonate biosynthesis; CMP-3-deoxy-D-manno-octulosonate from 3-deoxy-D-manno-octulosonate and CTP: step 1/1. Its pathway is bacterial outer membrane biogenesis; lipopolysaccharide biosynthesis. In terms of biological role, activates KDO (a required 8-carbon sugar) for incorporation into bacterial lipopolysaccharide in Gram-negative bacteria. This Salmonella arizonae (strain ATCC BAA-731 / CDC346-86 / RSK2980) protein is 3-deoxy-manno-octulosonate cytidylyltransferase.